The chain runs to 166 residues: Small ribosomal subunit protein uS5 (166 aa).

The S5 DRBM domain maps to 11 to 74 (LEDRVVSINR…EDAKKNLINV (64 aa)).

The protein belongs to the universal ribosomal protein uS5 family. As to quaternary structure, part of the 30S ribosomal subunit. Contacts proteins S4 and S8.

Functionally, with S4 and S12 plays an important role in translational accuracy. In terms of biological role, located at the back of the 30S subunit body where it stabilizes the conformation of the head with respect to the body. The polypeptide is Small ribosomal subunit protein uS5 (Latilactobacillus sakei subsp. sakei (strain 23K) (Lactobacillus sakei subsp. sakei)).